We begin with the raw amino-acid sequence, 46 residues long: Large ribosomal subunit protein bL33B (46 aa).

This sequence belongs to the bacterial ribosomal protein bL33 family.

The chain is Large ribosomal subunit protein bL33B (rpmG2) from Mycoplasmopsis pulmonis (strain UAB CTIP) (Mycoplasma pulmonis).